The chain runs to 214 residues: Type IV major pilin protein PilE1 (214 aa).

The propeptide at 1-7 (MNTLQKG) is leader sequence. F8 carries the N-methylphenylalanine modification. Residues 8-28 (FTLIELMIVIAIVGILAAVAL) form a helical membrane-spanning segment. C127 and C161 are disulfide-bonded. The interval 182 to 214 (AGTDAVTADTTGKDKEIDTKHLPSTCRDKSSAE) is disordered. Basic and acidic residues predominate over residues 192 to 214 (TGKDKEIDTKHLPSTCRDKSSAE).

The protein belongs to the N-Me-Phe pilin family. As to quaternary structure, the pili are polar flexible filaments of about 5.4 nanometers diameter and 2.5 micrometers average length; they consist of only a single polypeptide chain arranged in a helical configuration of five subunits per turn in the assembled pilus.

The protein resides in the fimbrium. Its subcellular location is the membrane. Major component of the type IV pilus (T4P) that plays a role in cellular adherence, microcolony formation, resistance to neutrophil mediated killing, twitching motility as well as transformation. Mediates the attachment and the formation of bacterial microcolonies on host epithelial cells. Mechanistically, pili retractation induces host NF-kappa-B activation in infected cells, which is temporally associated with the formation of gonococcal microcolonies. The chain is Type IV major pilin protein PilE1 (pilE1) from Neisseria gonorrhoeae.